Reading from the N-terminus, the 189-residue chain is Segregation and condensation protein B (189 aa).

The protein belongs to the ScpB family. As to quaternary structure, homodimer. Homodimerization may be required to stabilize the binding of ScpA to the Smc head domains. Component of a cohesin-like complex composed of ScpA, ScpB and the Smc homodimer, in which ScpA and ScpB bind to the head domain of Smc. The presence of the three proteins is required for the association of the complex with DNA.

The protein resides in the cytoplasm. Participates in chromosomal partition during cell division. May act via the formation of a condensin-like complex containing Smc and ScpA that pull DNA away from mid-cell into both cell halves. This chain is Segregation and condensation protein B, found in Clostridium tetani (strain Massachusetts / E88).